The chain runs to 262 residues: Inner membrane protein YcfZ (262 aa).

Residues 1–4 (MKKF) lie on the Cytoplasmic side of the membrane. Residues 5-27 (IILLSLLILLPLTAASKPLIPIM) form a helical membrane-spanning segment. Topologically, residues 28 to 182 (KTLFTDVTGT…HENAPPGSTN (155 aa)) are periplasmic. A helical membrane pass occupies residues 183–202 (TLGFIAWAATFILFSRIFYY). Topologically, residues 203-206 (TTRF) are cytoplasmic. A helical membrane pass occupies residues 207–229 (IYALKFAVAMTIANMGYQALCLY). Residues 230 to 238 (IDNSFAITR) are Periplasmic-facing. The helical transmembrane segment at 239–258 (ISPLWAGLIGVCTFIAALLL) threads the bilayer. The Cytoplasmic segment spans residues 259-262 (TSKR).

It localises to the cell inner membrane. This chain is Inner membrane protein YcfZ (ycfZ), found in Escherichia coli (strain K12).